The chain runs to 487 residues: Proline--tRNA ligase (487 aa).

It belongs to the class-II aminoacyl-tRNA synthetase family. ProS type 3 subfamily. As to quaternary structure, homodimer.

The protein resides in the cytoplasm. The catalysed reaction is tRNA(Pro) + L-proline + ATP = L-prolyl-tRNA(Pro) + AMP + diphosphate. Its function is as follows. Catalyzes the attachment of proline to tRNA(Pro) in a two-step reaction: proline is first activated by ATP to form Pro-AMP and then transferred to the acceptor end of tRNA(Pro). This is Proline--tRNA ligase from Pyrobaculum calidifontis (strain DSM 21063 / JCM 11548 / VA1).